The primary structure comprises 391 residues: Probable tRNA sulfurtransferase (391 aa).

One can recognise a THUMP domain in the interval 60–167 (DEIIDHIKKV…KDNCYVYTDR (108 aa)). ATP is bound by residues 185–186 (LL), 210–211 (HF), Arg-267, Gly-289, and Gln-298.

It belongs to the ThiI family.

The protein localises to the cytoplasm. It catalyses the reaction [ThiI sulfur-carrier protein]-S-sulfanyl-L-cysteine + a uridine in tRNA + 2 reduced [2Fe-2S]-[ferredoxin] + ATP + H(+) = [ThiI sulfur-carrier protein]-L-cysteine + a 4-thiouridine in tRNA + 2 oxidized [2Fe-2S]-[ferredoxin] + AMP + diphosphate. The enzyme catalyses [ThiS sulfur-carrier protein]-C-terminal Gly-Gly-AMP + S-sulfanyl-L-cysteinyl-[cysteine desulfurase] + AH2 = [ThiS sulfur-carrier protein]-C-terminal-Gly-aminoethanethioate + L-cysteinyl-[cysteine desulfurase] + A + AMP + 2 H(+). The protein operates within cofactor biosynthesis; thiamine diphosphate biosynthesis. Its function is as follows. Catalyzes the ATP-dependent transfer of a sulfur to tRNA to produce 4-thiouridine in position 8 of tRNAs, which functions as a near-UV photosensor. Also catalyzes the transfer of sulfur to the sulfur carrier protein ThiS, forming ThiS-thiocarboxylate. This is a step in the synthesis of thiazole, in the thiamine biosynthesis pathway. The sulfur is donated as persulfide by IscS. This Finegoldia magna (strain ATCC 29328 / DSM 20472 / WAL 2508) (Peptostreptococcus magnus) protein is Probable tRNA sulfurtransferase.